The chain runs to 247 residues: Probable transcriptional regulatory protein lpl1249 (247 aa).

It belongs to the TACO1 family.

Its subcellular location is the cytoplasm. This is Probable transcriptional regulatory protein lpl1249 from Legionella pneumophila (strain Lens).